The primary structure comprises 633 residues: UvrABC system protein C (633 aa).

The GIY-YIG domain occupies 37–115; that stretch reads PKPGVYRMFG…IKSLKPRFNI (79 aa). Residues 225–260 form the UVR domain; sequence NALREDLQTRMAQASEAMDFETAAKLRDRIRAIAAV.

The protein belongs to the UvrC family. As to quaternary structure, interacts with UvrB in an incision complex.

It localises to the cytoplasm. Functionally, the UvrABC repair system catalyzes the recognition and processing of DNA lesions. UvrC both incises the 5' and 3' sides of the lesion. The N-terminal half is responsible for the 3' incision and the C-terminal half is responsible for the 5' incision. The protein is UvrABC system protein C of Maricaulis maris (strain MCS10) (Caulobacter maris).